The primary structure comprises 283 residues: Gap junction alpha-6 protein (283 aa).

Residues 1-23 (MSDWSALHQLLEKVQPYSTAGGK) lie on the Cytoplasmic side of the membrane. A helical membrane pass occupies residues 24–41 (VWIKVLFIFRILLLGTAI). Over 42–76 (ESAWSDEQFEFHCNTQQPGCENVCYDHAFPISHVR) the chain is Extracellular. A helical transmembrane segment spans residues 77-99 (LWVLQVIFVSVPILLYLAHVYYV). The Cytoplasmic portion of the chain corresponds to 100–150 (VRQNKKLNKQEEELEAAHFNEASVERHLETIAGEQFKCGSEEQSKVKMRGR). Residues 151 to 173 (LLLTYMASIFFKSVFEMAFLLIQ) traverse the membrane as a helical segment. The Extracellular segment spans residues 174 to 208 (WYIYGFTLSALYICEQSPCPRRVDCFLSRPTEKTI). The chain crosses the membrane as a helical span at residues 209–231 (FILFMFVVSVVSFVLDIIELFYV). Topologically, residues 232–283 (LFKAIKNRMRKAEDEVYCDELPCPSHVSSSTVLTTIDSSEQAVPVELSSVCI) are cytoplasmic.

It belongs to the connexin family. Alpha-type (group II) subfamily. As to quaternary structure, a connexon is composed of a hexamer of connexins.

It is found in the cell membrane. It localises to the cell junction. The protein resides in the gap junction. In terms of biological role, one gap junction consists of a cluster of closely packed pairs of transmembrane channels, the connexons, through which materials of low MW diffuse from one cell to a neighboring cell. This chain is Gap junction alpha-6 protein (Gja6), found in Mus musculus (Mouse).